The sequence spans 600 residues: Potassium-transporting ATPase potassium-binding subunit (600 aa).

Transmembrane regions (helical) follow at residues 6 to 26 (IILL…LGTY), 65 to 85 (GYAI…YAVQ), 136 to 156 (ALSG…YALI), 179 to 199 (LYVL…QGVI), 283 to 303 (FSNL…CFTF), 314 to 334 (WAIL…VMGA), 367 to 387 (FGIS…CGAV), 419 to 439 (GLYG…LMIG), 458 to 478 (SLVI…AVVL), 523 to 543 (VMLA…VLAI), and 566 to 586 (LFIA…YVPA).

The protein belongs to the KdpA family. As to quaternary structure, the system is composed of three essential subunits: KdpA, KdpB and KdpC.

The protein localises to the cell inner membrane. In terms of biological role, part of the high-affinity ATP-driven potassium transport (or Kdp) system, which catalyzes the hydrolysis of ATP coupled with the electrogenic transport of potassium into the cytoplasm. This subunit binds the periplasmic potassium ions and delivers the ions to the membrane domain of KdpB through an intramembrane tunnel. This is Potassium-transporting ATPase potassium-binding subunit from Janthinobacterium sp. (strain Marseille) (Minibacterium massiliensis).